A 264-amino-acid chain; its full sequence is Vacuolar protein sorting-associated protein 75 (264 aa).

Position 3 is a phosphoserine (Ser-3). Residues 223-264 form a disordered region; that stretch reads LEDEEGESGLSADGDSEDDDGSLGEVDLPLSDEEPSSKKRKV.

The protein belongs to the nucleosome assembly protein (NAP) family. In terms of assembly, homodimer. Homotetramer. Forms a complex with RTT109; consisting of a VPS75 dimer contacted by two RTT109 subunits. Interacts with RTT109; the interaction is direct. Interacts with ASF1. Interacts with histone H3/H4 heterodimers and heterotetramers via histone H3.

It localises to the nucleus. Histone chaperone which acts as a cofactor stimulating histone H3 acetylation by RTT109. Preferentially stimulates histone H3 'Lys-9' acetylation by RTT109. May also stimulate histone H3 'Lys-56' acetylation by RTT109. Assembles nucleosomes (in vitro). The sequence is that of Vacuolar protein sorting-associated protein 75 (VPS75) from Saccharomyces cerevisiae (strain ATCC 204508 / S288c) (Baker's yeast).